The following is a 310-amino-acid chain: HPr kinase/phosphorylase (310 aa).

Active-site residues include histidine 138 and lysine 159. 153–160 (GDSGIGKS) contacts ATP. Mg(2+) is bound at residue serine 160. The active-site Proton acceptor; for phosphorylation activity. Proton donor; for dephosphorylation activity is the aspartate 177. An important for the catalytic mechanism of both phosphorylation and dephosphorylation region spans residues 201 to 210 (LEIRGVGIID). Glutamate 202 contacts Mg(2+). The active site involves arginine 243. The segment at 264–269 (PVQTGR) is important for the catalytic mechanism of dephosphorylation.

It belongs to the HPrK/P family. Homohexamer. It depends on Mg(2+) as a cofactor. Requires Mn(2+) as cofactor.

The enzyme catalyses [HPr protein]-L-serine + ATP = [HPr protein]-O-phospho-L-serine + ADP + H(+). It carries out the reaction [HPr protein]-O-phospho-L-serine + phosphate + H(+) = [HPr protein]-L-serine + diphosphate. Kinase activity is inhibited by inorganic phosphate (Pi). In contrast to many other bacteria, neither kinase activity nor phosphorylase activity is affected by fructose 1,6-bisphosphate (FBP). Functionally, catalyzes the ATP- as well as probably the pyrophosphate-dependent phosphorylation of 'Ser-46' in HPr, a phosphocarrier protein of the phosphoenolpyruvate-dependent sugar phosphotransferase system (PTS). HprK/P also catalyzes the pyrophosphate-producing, inorganic phosphate-dependent dephosphorylation (phosphorolysis) of seryl-phosphorylated HPr (P-Ser-HPr). The two antagonistic activities of HprK/P are regulated by several intracellular metabolites, which change their concentration in response to the absence or presence of rapidly metabolisable carbon sources (glucose, fructose, etc.) in the growth medium. Therefore, by controlling the phosphorylation state of HPr, the HPrK/P is a sensor enzyme that plays a major role in the regulation of carbon metabolism and sugar transport: it probably mediates carbon catabolite repression (CCR), and regulates PTS-catalyzed carbohydrate uptake and inducer exclusion. The protein is HPr kinase/phosphorylase (hprK) of Streptococcus equinus (Streptococcus bovis).